Here is a 491-residue protein sequence, read N- to C-terminus: Ketol-acid reductoisomerase (NADP(+)) (491 aa).

Residues 14-208 (LDQLGRCRFM…GGHRAGVLES (195 aa)) form the KARI N-terminal Rossmann domain. NADP(+) is bound by residues 45–48 (CGAQ), Arg-68, Arg-76, Ser-78, and 108–110 (DKQ). His-132 is a catalytic residue. Gly-158 serves as a coordination point for NADP(+). 2 consecutive KARI C-terminal knotted domains span residues 209-344 (SFVA…NAPK) and 345-485 (YEGK…MTDM). Asp-217, Glu-221, Glu-389, and Glu-393 together coordinate Mg(2+). Residue Ser-414 participates in substrate binding.

Belongs to the ketol-acid reductoisomerase family. Mg(2+) is required as a cofactor.

The enzyme catalyses (2R)-2,3-dihydroxy-3-methylbutanoate + NADP(+) = (2S)-2-acetolactate + NADPH + H(+). It carries out the reaction (2R,3R)-2,3-dihydroxy-3-methylpentanoate + NADP(+) = (S)-2-ethyl-2-hydroxy-3-oxobutanoate + NADPH + H(+). The protein operates within amino-acid biosynthesis; L-isoleucine biosynthesis; L-isoleucine from 2-oxobutanoate: step 2/4. It participates in amino-acid biosynthesis; L-valine biosynthesis; L-valine from pyruvate: step 2/4. Functionally, involved in the biosynthesis of branched-chain amino acids (BCAA). Catalyzes an alkyl-migration followed by a ketol-acid reduction of (S)-2-acetolactate (S2AL) to yield (R)-2,3-dihydroxy-isovalerate. In the isomerase reaction, S2AL is rearranged via a Mg-dependent methyl migration to produce 3-hydroxy-3-methyl-2-ketobutyrate (HMKB). In the reductase reaction, this 2-ketoacid undergoes a metal-dependent reduction by NADPH to yield (R)-2,3-dihydroxy-isovalerate. The chain is Ketol-acid reductoisomerase (NADP(+)) from Pasteurella multocida (strain Pm70).